The primary structure comprises 249 residues: ATP-dependent dethiobiotin synthetase BioD (249 aa).

11-16 (NVGKTI) is a binding site for ATP. Residue threonine 15 participates in Mg(2+) binding. Lysine 31 is a catalytic residue. Residue threonine 35 participates in substrate binding. ATP is bound by residues aspartate 40, 127-130 (EGAG), 188-189 (NS), and 215-217 (PYL). Mg(2+) is bound by residues aspartate 40 and glutamate 127.

Belongs to the dethiobiotin synthetase family. In terms of assembly, homodimer. It depends on Mg(2+) as a cofactor.

It is found in the cytoplasm. The enzyme catalyses (7R,8S)-7,8-diammoniononanoate + CO2 + ATP = (4R,5S)-dethiobiotin + ADP + phosphate + 3 H(+). The protein operates within cofactor biosynthesis; biotin biosynthesis; biotin from 7,8-diaminononanoate: step 1/2. Functionally, catalyzes a mechanistically unusual reaction, the ATP-dependent insertion of CO2 between the N7 and N8 nitrogen atoms of 7,8-diaminopelargonic acid (DAPA, also called 7,8-diammoniononanoate) to form a ureido ring. This is ATP-dependent dethiobiotin synthetase BioD from Neorickettsia sennetsu (strain ATCC VR-367 / Miyayama) (Ehrlichia sennetsu).